The chain runs to 610 residues: Phosphomethylpyrimidine synthase (610 aa).

Residues Asn216, Met245, Tyr274, His310, 330-332, 371-374, and Glu410 contribute to the substrate site; these read SRG and DGLR. His414 contacts Zn(2+). Tyr437 is a binding site for substrate. His478 provides a ligand contact to Zn(2+). Residues Cys558, Cys561, and Cys566 each contribute to the [4Fe-4S] cluster site.

Belongs to the ThiC family. In terms of assembly, homodimer. [4Fe-4S] cluster is required as a cofactor.

It catalyses the reaction 5-amino-1-(5-phospho-beta-D-ribosyl)imidazole + S-adenosyl-L-methionine = 4-amino-2-methyl-5-(phosphooxymethyl)pyrimidine + CO + 5'-deoxyadenosine + formate + L-methionine + 3 H(+). The protein operates within cofactor biosynthesis; thiamine diphosphate biosynthesis. In terms of biological role, catalyzes the synthesis of the hydroxymethylpyrimidine phosphate (HMP-P) moiety of thiamine from aminoimidazole ribotide (AIR) in a radical S-adenosyl-L-methionine (SAM)-dependent reaction. The chain is Phosphomethylpyrimidine synthase from Allorhizobium ampelinum (strain ATCC BAA-846 / DSM 112012 / S4) (Agrobacterium vitis (strain S4)).